The chain runs to 246 residues: E3 ubiquitin-protein ligase MARCHF2 (246 aa).

Residues 56–116 (DTPSDCPFCR…ELCHTEFAVE (61 aa)) form an RING-CH-type zinc finger. The Zn(2+) site is built by C64, C67, C80, C82, H90, C93, C106, and C109. The interval 121 to 246 (PLTEWLKDPG…LKKVAEETPV (126 aa)) is required for interaction with IKBKG. The next 2 helical transmembrane spans lie at 138 to 158 (LCCD…SGWL) and 175 to 195 (AVGL…WTLV).

In terms of assembly, interacts with STX6; the interaction promotes MARCHF2-mediated ubiquitination and degradation of CFTR. Interacts with MARCHF3. Interacts with GOPC/CAL; the interaction leads to CFTR ubiquitination and degradation. Interacts with CFTR; the interaction leads to CFTR ubiqtuitination and degradation. Interacts (via PDZ domain) with DLG1 (via PDZ domains); the interaction leads to DLG1 ubiqtuitination and degradation. Interacts with ERGIC3. Interacts with ADRB2. Interacts with IKBKG/NEMO; during the late stages of macrophage viral and bacterial infection; the interaction leads to ubiquitination and degradation of IKBKG/NEMO. In terms of tissue distribution, ubiquitously expressed. Present in liver (at protein level).

It localises to the endoplasmic reticulum membrane. The protein resides in the lysosome membrane. The protein localises to the endosome membrane. It is found in the golgi apparatus membrane. Its subcellular location is the cytoplasm. It localises to the cell membrane. The catalysed reaction is S-ubiquitinyl-[E2 ubiquitin-conjugating enzyme]-L-cysteine + [acceptor protein]-L-lysine = [E2 ubiquitin-conjugating enzyme]-L-cysteine + N(6)-ubiquitinyl-[acceptor protein]-L-lysine.. It functions in the pathway protein modification; protein ubiquitination. Functionally, E3 ubiquitin-protein ligase that may mediate ubiquitination of TFRC and CD86, and promote their subsequent endocytosis and sorting to lysosomes via multivesicular bodies. E3 ubiquitin ligases accept ubiquitin from an E2 ubiquitin-conjugating enzyme in the form of a thioester and then directly transfer the ubiquitin to targeted substrates. Together with GOPC/CAL mediates the ubiquitination and lysosomal degradation of CFTR. Ubiquitinates and therefore mediates the degradation of DLG1. Regulates the intracellular trafficking and secretion of alpha1-antitrypsin/SERPINA1 and HP/haptoglobin via ubiquitination and degradation of the cargo receptor ERGIC3. Negatively regulates the antiviral and antibacterial immune response by repression of the NF-kB and type 1 IFN signaling pathways, via MARCHF2-mediated K48-linked polyubiquitination of IKBKG/NEMO, resulting in its proteasomal degradation. May be involved in endosomal trafficking through interaction with STX6. This is E3 ubiquitin-protein ligase MARCHF2 (Marchf2) from Rattus norvegicus (Rat).